Consider the following 447-residue polypeptide: MNGAGGNHQQQQQQQQRLRQQQQQQALLMQQALQQQQQYQSGVLAAAAAAAMTQMEPISNGNLPPGFDPSTCRSVYVGNVHPNVTESLLIEVFQSSGLVERCKLIRKEKSSFGFVDYYDRRSAALAIMTLHGRHICGQAIKVNWAYASTQREDTSGHFHIFVGDLSSEVNDATLYACFSAYPSCSDARVMWDNKTGRSRGYGFVSFRNQQEAETAITEMTGKWLGSRQIRCNWATKNNAEEKQETDNHNAVVLTNGSSSNPGMEASQDTGSKENPENNPDCTTVYVGNLGHEVNRDELHRHFYNLGVGAIEEVRVQQDKGFGFVRYSNHGEAALAIQMANGLVVRGKPIKCSWGNKPTPPGTSSKPLPPPLPSYQPVPMAGVPQGFSAADIVAYQRQLTLSQVAAGQIAGQHGLAGQVSAGLLAAGSQALYDGYPNQSSAQQLMYYN.

RRM domains lie at 73–147 (RSVY…WAYA) and 158–236 (FHIF…WATK). Residues 254–269 (TNGSSSNPGMEASQDT) are compositionally biased toward polar residues. Disordered stretches follow at residues 254–279 (TNGS…ENNP) and 353–372 (WGNK…PPLP). Residues 282–356 (TTVYVGNLGH…KPIKCSWGNK (75 aa)) enclose the RRM 3 domain.

Interacts with RBP-P.

Functionally, RNA-binding protein. This is RNA-binding protein 208 from Oryza sativa subsp. japonica (Rice).